A 525-amino-acid polypeptide reads, in one-letter code: GMP synthase [glutamine-hydrolyzing] (525 aa).

A Glutamine amidotransferase type-1 domain is found at 9 to 207; sequence KILILDFGSQ…IVDICGCDTL (199 aa). The active-site Nucleophile is Cys86. Residues His181 and Glu183 contribute to the active site. The 193-residue stretch at 208 to 400 folds into the GMPS ATP-PPase domain; it reads WTPANIAQDA…LGLPYDMVYR (193 aa). 235-241 contributes to the ATP binding site; the sequence is SGGVDSS.

Homodimer.

It catalyses the reaction XMP + L-glutamine + ATP + H2O = GMP + L-glutamate + AMP + diphosphate + 2 H(+). The protein operates within purine metabolism; GMP biosynthesis; GMP from XMP (L-Gln route): step 1/1. In terms of biological role, catalyzes the synthesis of GMP from XMP. The protein is GMP synthase [glutamine-hydrolyzing] of Marinomonas sp. (strain MWYL1).